The chain runs to 522 residues: MSKGEDKFSSVLKLTEFDYIVPSQICIKPVEIEKSNDSGNSKIQIESDGRYVEISEDGTKKSLEKATITLNDCLACSGCITSAESVLITAQSISEFLLNVNNNNDSNNNQDEKKTIVITLSPQSRASLASHFKISTLSVVKKLKTFFKKLNINYLFDSSFSRDFSLLESAAEFVARYKKTYINNNNDEETGKLEPFPLPMLSSACPGWICYAEKTHGEFILPFISTTKSPQQIMGTLVKYYFTEKILDNNTNNNNNNNNNNNNNNSKIKPSNIYHVTIMPCYDKKLEASRNDFYNDIFKTKDVDCVLSTTEILDLFKEKEIDFLSLEEDNSIEEQFFQLSPSNQFYSINGSSGGYLEFIYKYAAKELFNVDIVEPIQYKIGRNQDFKEVSLEIDGKKVLNFAQAYGFRNIQNIVRKIKTNITTKKDTNSQYDFVEIMACPSGCINGGGQIKSDAIKENKAILLDSEEKYNENVIFRQPIDNQSVQNIYNTWLNGCFSTDSKTNLHTQYHRIEKTTNALNIKW.

Residues cysteine 26, cysteine 73, cysteine 76, cysteine 79, cysteine 205, cysteine 281, cysteine 439, and cysteine 443 each coordinate [4Fe-4S] cluster.

It belongs to the NARF family.

Its function is as follows. Component of the cytosolic iron-sulfur (Fe/S) protein assembly machinery. Required for maturation of extramitochondrial Fe/S proteins. In Dictyostelium discoideum (Social amoeba), this protein is Probable cytosolic Fe-S cluster assembly factor narfl (narfl).